We begin with the raw amino-acid sequence, 514 residues long: Cilia- and flagella-associated protein 53 (514 aa).

The stretch at 207-429 forms a coiled coil; it reads EDRLAKERRE…ERINEGLKEL (223 aa).

This sequence belongs to the CFAP53 family. Microtubule inner protein component of sperm flagellar doublet microtubules. Interacts with PIERCE1 and PIERCE2; the interactions link outer dynein arms docking complex (ODA-DC) to the internal microtubule inner proteins (MIP) in cilium axoneme. Interacts with CCDC38. Interacts with CCDC42 and IFT88. Interacts with centriolar satellite proteins PIBF1/CEP90 and PCM1. Interacts with dyneins DNAIC1, DNAIC2 AND DNAH11 and with ODA-DC component ODAD4/TTC25. In terms of tissue distribution, expressed in trachea multiciliated cells.

It localises to the cytoplasm. Its subcellular location is the cytoskeleton. The protein localises to the cilium axoneme. The protein resides in the flagellum axoneme. It is found in the microtubule organizing center. It localises to the centrosome. Its subcellular location is the centriolar satellite. The protein localises to the spindle pole. Functionally, microtubule inner protein (MIP) part of the dynein-decorated doublet microtubules (DMTs) in cilia axoneme, which is required for motile cilia beating. Regulates motility patterns of both 9+0 and 9+2 motile cilia through differential localization and recruitment of axonemal dynein components. Required for centriolar satellite integrity and non-motile cilium assembly. Required for motile cilium formation. Through its role in beating of primary cilia, involved in the establishment of organ laterality during embryogenesis. Required for sperm flagellum biogenesis and is essential for male fertility. The protein is Cilia- and flagella-associated protein 53 (CFAP53) of Bos taurus (Bovine).